Here is a 444-residue protein sequence, read N- to C-terminus: MTLDLSKPATAGYLSGFGNEFATEALPGALPHGRNSPQRAPYGLYAEQLSGTAFTAPRGHNRRAWLYRIRPAAVHRPFEPFTGRQRLVAEFGDSADVPPTPPNQLRWDPLPMPVEPTDFVEGLVTMAGNGSAAAMNGCAIHLYAANRSMQDRFFYSADGELLIVPQQGRLFIATEFGRLDVEPAEIAVIPRGVRFAVALPDGDARGYICENFGALLRLPDLGPIGSNGLANPRDFLTPQAAYEDREGAFELIAKLNGRLWRADIGHSPFDVVAWHGNYAPYKYDLRLFNTIGSISYDHPDPSIFLVLQSQSDSPGVDAIDFVIFPPRWLAAEDTFRPPWFHRNVASEFMGLVHGAYDAKAEGFVPGGASLHNCMSGHGPDADTFEKASAIDTTRPHKVDATMAFMFETRTLIRPTRYALDTAQLQADYFECWQRIEKHFNPEQR.

Positions 92–111 (GDSADVPPTPPNQLRWDPLP) are disordered. His298 functions as the Proton acceptor in the catalytic mechanism. 2 residues coordinate Fe cation: His341 and Glu347. Homogentisate contacts are provided by Tyr356 and His377. Residue His377 coordinates Fe cation.

This sequence belongs to the homogentisate dioxygenase family. In terms of assembly, hexamer; dimer of trimers. Requires Fe cation as cofactor.

The enzyme catalyses homogentisate + O2 = 4-maleylacetoacetate + H(+). It functions in the pathway amino-acid degradation; L-phenylalanine degradation; acetoacetate and fumarate from L-phenylalanine: step 4/6. Its function is as follows. Involved in the catabolism of homogentisate (2,5-dihydroxyphenylacetate or 2,5-OH-PhAc), a central intermediate in the degradation of phenylalanine and tyrosine. Catalyzes the oxidative ring cleavage of the aromatic ring of homogentisate to yield maleylacetoacetate. The polypeptide is Homogentisate 1,2-dioxygenase (Burkholderia vietnamiensis (strain G4 / LMG 22486) (Burkholderia cepacia (strain R1808))).